Here is a 433-residue protein sequence, read N- to C-terminus: MDWVALDDTDSPAGGCTTHAAVLLRAELAEAGAEPVGRPLLVRLNPNVPFKTRGNAAVALPVEAPWSVDIEAVVLRALKKVVRKGYPETRPGLVVCEGEPPRVCESVYEEAVRRILNPGRVKESVDDDVNVVLEGRGIVGAVAALGFARVRKDHEVTFEGIAYRAEKYWGTERRVEESSIREFDRRTFPVTFDNLDSRDGDVLITPNTPCPVLYGVRSVEPDVLEVAPDMIKTREPVVEYEIFESNQATDAHLVRVDRLADAEDYSNPVLDLTVVEEPRRIPGGHVVVRCEDEEGVRVDIAAFRPARPLTEVVAALHPGDEIRVAGALRPETPKHPRTVNVEKLRVLRLERVEEVRNPVCGRCRRSMKSAGRKKGFKCSCGERAPEDSKIGVEVPRELVEGVTYEAPPVARRHLSKPEYLVELGLLEPSPLSR.

This sequence belongs to the TiaS family.

The protein resides in the cytoplasm. It catalyses the reaction cytidine(34) in tRNA(Ile2) + agmatine + ATP + H2O = 2-agmatinylcytidine(34) in tRNA(Ile2) + AMP + 2 phosphate + 2 H(+). Its function is as follows. ATP-dependent agmatine transferase that catalyzes the formation of 2-agmatinylcytidine (agm2C) at the wobble position (C34) of tRNA(Ile2), converting the codon specificity from AUG to AUA. The polypeptide is tRNA(Ile2) 2-agmatinylcytidine synthetase TiaS (Methanopyrus kandleri (strain AV19 / DSM 6324 / JCM 9639 / NBRC 100938)).